A 260-amino-acid polypeptide reads, in one-letter code: Thiazole synthase (260 aa).

Lys96 serves as the catalytic Schiff-base intermediate with DXP. 1-deoxy-D-xylulose 5-phosphate-binding positions include Gly157, 184–185 (AG), and 206–207 (NT).

This sequence belongs to the ThiG family. As to quaternary structure, homotetramer. Forms heterodimers with either ThiH or ThiS.

Its subcellular location is the cytoplasm. The enzyme catalyses [ThiS sulfur-carrier protein]-C-terminal-Gly-aminoethanethioate + 2-iminoacetate + 1-deoxy-D-xylulose 5-phosphate = [ThiS sulfur-carrier protein]-C-terminal Gly-Gly + 2-[(2R,5Z)-2-carboxy-4-methylthiazol-5(2H)-ylidene]ethyl phosphate + 2 H2O + H(+). It functions in the pathway cofactor biosynthesis; thiamine diphosphate biosynthesis. Its function is as follows. Catalyzes the rearrangement of 1-deoxy-D-xylulose 5-phosphate (DXP) to produce the thiazole phosphate moiety of thiamine. Sulfur is provided by the thiocarboxylate moiety of the carrier protein ThiS. In vitro, sulfur can be provided by H(2)S. This is Thiazole synthase from Bradyrhizobium sp. (strain BTAi1 / ATCC BAA-1182).